A 216-amino-acid chain; its full sequence is Histone doublet H4-H3 (216 aa).

Residues 1-12 show a composition bias toward basic residues; that stretch reads MSKAGKKVKAQQ. Residues 1 to 23 are disordered; sequence MSKAGKKVKAQQHGHLADHVSVG.

The protein resides in the host nucleus. Its subcellular location is the host cytoplasm. It localises to the virion. Its function is as follows. Histone-like protein that is recruited to viral factories during viral replication and participates in viral DNA packaging and virion production probably by forming unstable nucleosome-like particles. May compact the viral DNA. The chain is Histone doublet H4-H3 from Melbournevirus (MelV).